A 147-amino-acid polypeptide reads, in one-letter code: Large ribosomal subunit protein bL9 (147 aa).

This sequence belongs to the bacterial ribosomal protein bL9 family.

Its function is as follows. Binds to the 23S rRNA. The protein is Large ribosomal subunit protein bL9 of Bacteroides fragilis (strain ATCC 25285 / DSM 2151 / CCUG 4856 / JCM 11019 / LMG 10263 / NCTC 9343 / Onslow / VPI 2553 / EN-2).